Here is a 219-residue protein sequence, read N- to C-terminus: Imidazole glycerol phosphate synthase subunit HisH (219 aa).

One can recognise a Glutamine amidotransferase type-1 domain in the interval 2–218 (KVVVIDSGTG…MVWTPEGTSG (217 aa)). The Nucleophile role is filled by Cys-87. Catalysis depends on residues His-193 and Glu-195.

In terms of assembly, heterodimer of HisH and HisF.

It is found in the cytoplasm. It catalyses the reaction 5-[(5-phospho-1-deoxy-D-ribulos-1-ylimino)methylamino]-1-(5-phospho-beta-D-ribosyl)imidazole-4-carboxamide + L-glutamine = D-erythro-1-(imidazol-4-yl)glycerol 3-phosphate + 5-amino-1-(5-phospho-beta-D-ribosyl)imidazole-4-carboxamide + L-glutamate + H(+). The enzyme catalyses L-glutamine + H2O = L-glutamate + NH4(+). It functions in the pathway amino-acid biosynthesis; L-histidine biosynthesis; L-histidine from 5-phospho-alpha-D-ribose 1-diphosphate: step 5/9. IGPS catalyzes the conversion of PRFAR and glutamine to IGP, AICAR and glutamate. The HisH subunit catalyzes the hydrolysis of glutamine to glutamate and ammonia as part of the synthesis of IGP and AICAR. The resulting ammonia molecule is channeled to the active site of HisF. The chain is Imidazole glycerol phosphate synthase subunit HisH from Granulibacter bethesdensis (strain ATCC BAA-1260 / CGDNIH1).